Here is an 89-residue protein sequence, read N- to C-terminus: uncharacterized protein (89 aa).

A signal peptide spans 1 to 19; it reads MIVRTLLIAAALLGGTAQA.

The protein localises to the secreted. This is an uncharacterized protein from Pseudomonas aeruginosa (strain UCBPP-PA14).